A 169-amino-acid chain; its full sequence is Neudesin (169 aa).

The first 28 residues, 1–28, serve as a signal peptide directing secretion; it reads MAGPAPGRRLVALALIVALAVGLPTAGA. In terms of domain architecture, Cytochrome b5 heme-binding spans 41-126; it reads VRLFTEEELA…EELESLDDVF (86 aa). Position 133 is an N6-acetyllysine (lysine 133). The disordered stretch occupies residues 148 to 169; sequence DGSPNLDFKPEDQPHFDIKDEF. Over residues 155–169 the composition is skewed to basic and acidic residues; the sequence is FKPEDQPHFDIKDEF.

Belongs to the cytochrome b5 family. MAPR subfamily. As to quaternary structure, interacts with PINK1 and PARK7.

Its subcellular location is the secreted. The protein resides in the extracellular space. The protein localises to the mitochondrion. It is found in the endoplasmic reticulum. Its function is as follows. Acts as a neurotrophic factor in postnatal mature neurons enhancing neuronal survival. Promotes cell proliferation and neurogenesis in undifferentiated neural progenitor cells at the embryonic stage and inhibits differentiation of astrocytes. Its neurotrophic activity is exerted via MAPK1/ERK2, MAPK3/ERK1 and AKT1/AKT pathways. Neurotrophic activity is enhanced by binding to heme. Also acts as an anorexigenic neurotrophic factor that contributes to energy balance. This chain is Neudesin (NENF), found in Bos taurus (Bovine).